We begin with the raw amino-acid sequence, 315 residues long: Glutathione synthetase (315 aa).

The region spanning 125-310 is the ATP-grasp domain; sequence KLFTAWFSDL…ITGMLMDAIE (186 aa). Residue 151–207 participates in ATP binding; that stretch reads WEKHSDIILKPLDGMGGASIFRVKEGDPNLGVIAETLTEHGTRYCMAQNYLPAIKDG. Residues Glu-281 and Asn-283 each contribute to the Mg(2+) site.

Belongs to the prokaryotic GSH synthase family. The cofactor is Mg(2+). Mn(2+) serves as cofactor.

It catalyses the reaction gamma-L-glutamyl-L-cysteine + glycine + ATP = glutathione + ADP + phosphate + H(+). It participates in sulfur metabolism; glutathione biosynthesis; glutathione from L-cysteine and L-glutamate: step 2/2. This chain is Glutathione synthetase, found in Escherichia coli O157:H7.